A 412-amino-acid chain; its full sequence is MSTETIPDVRRLRALQAEVHEELTENILKFWATRTHDPVHGGFVGRVGPDGRPHPEAPRGAILNARILWTFAAAYRQLGTPLYREMAERAYRYFVRHFVDAEHGGVYWMVAADGRPLDTRKHVYAQSFAIYALSEWHRATGGEAALALARSIYDLIETHCADRVHGGYVEACDRAWRPLEDARLSAKDAPEPRSMNTHLHVLEAYANLYRVWPETELAARLQALIELFLRAIYHPATGHLILFFDERWRPRSRAVSFGHDIEASWLLLEAVDVLGQATLRPRVQQASLHLARATLAEGRAPDGSLYYEIGEQGHLDTDRHWWPQAEALVGFLNAYQESGEVLFYEAAEDVWRYIRERQRDTRGGEWFARVRDDGAPYPDDKVDFWKGPYHNGRACLEAIQRLRHLLEHVRSR.

It belongs to the cellobiose 2-epimerase family.

The catalysed reaction is D-cellobiose = beta-D-glucosyl-(1-&gt;4)-D-mannopyranose. Catalyzes the reversible epimerization of cellobiose to 4-O-beta-D-glucopyranosyl-D-mannose (Glc-Man). Can also use lactose, epilactose, mannobiose and cellotriose. Highly specific for oligosaccharides linked by the beta-1,4-glycosidic linkage. Shows preference for lactose. The sequence is that of Cellobiose 2-epimerase (ce) from Rhodothermus marinus (Rhodothermus obamensis).